We begin with the raw amino-acid sequence, 311 residues long: Methionyl-tRNA formyltransferase (311 aa).

110 to 113 (SLLP) provides a ligand contact to (6S)-5,6,7,8-tetrahydrofolate.

Belongs to the Fmt family.

The enzyme catalyses L-methionyl-tRNA(fMet) + (6R)-10-formyltetrahydrofolate = N-formyl-L-methionyl-tRNA(fMet) + (6S)-5,6,7,8-tetrahydrofolate + H(+). Functionally, attaches a formyl group to the free amino group of methionyl-tRNA(fMet). The formyl group appears to play a dual role in the initiator identity of N-formylmethionyl-tRNA by promoting its recognition by IF2 and preventing the misappropriation of this tRNA by the elongation apparatus. The protein is Methionyl-tRNA formyltransferase of Streptococcus pneumoniae (strain JJA).